Reading from the N-terminus, the 279-residue chain is Ribosomal RNA small subunit methyltransferase A (279 aa).

6 residues coordinate S-adenosyl-L-methionine: His15, Leu17, Gly42, Glu64, Asp89, and Asn109.

This sequence belongs to the class I-like SAM-binding methyltransferase superfamily. rRNA adenine N(6)-methyltransferase family. RsmA subfamily.

It localises to the cytoplasm. It carries out the reaction adenosine(1518)/adenosine(1519) in 16S rRNA + 4 S-adenosyl-L-methionine = N(6)-dimethyladenosine(1518)/N(6)-dimethyladenosine(1519) in 16S rRNA + 4 S-adenosyl-L-homocysteine + 4 H(+). Functionally, specifically dimethylates two adjacent adenosines (A1518 and A1519) in the loop of a conserved hairpin near the 3'-end of 16S rRNA in the 30S particle. May play a critical role in biogenesis of 30S subunits. This chain is Ribosomal RNA small subunit methyltransferase A, found in Prochlorococcus marinus (strain SARG / CCMP1375 / SS120).